The primary structure comprises 181 residues: TATA-box-binding protein (181 aa).

2 consecutive repeat copies span residues 8–84 (IENI…VDLM) and 99–175 (IQNI…YDRL).

The protein belongs to the TBP family.

General factor that plays a role in the activation of archaeal genes transcribed by RNA polymerase. Binds specifically to the TATA box promoter element which lies close to the position of transcription initiation. This chain is TATA-box-binding protein, found in Methanobrevibacter smithii (strain ATCC 35061 / DSM 861 / OCM 144 / PS).